Reading from the N-terminus, the 302-residue chain is Protoheme IX farnesyltransferase (302 aa).

Transmembrane regions (helical) follow at residues 26-46, 48-68, 98-118, 120-140, 148-168, 174-194, 221-241, 244-264, and 280-300; these read VVVL…PGQV, WVAL…AAAL, VLGF…LWIN, LTAA…TLYL, IVIG…AVTG, ALLL…ALAV, ILLY…TFMG, LYLA…VRLL, and IIYL…PVWL.

It belongs to the UbiA prenyltransferase family. Protoheme IX farnesyltransferase subfamily.

It is found in the cell inner membrane. It catalyses the reaction heme b + (2E,6E)-farnesyl diphosphate + H2O = Fe(II)-heme o + diphosphate. The protein operates within porphyrin-containing compound metabolism; heme O biosynthesis; heme O from protoheme: step 1/1. Functionally, converts heme B (protoheme IX) to heme O by substitution of the vinyl group on carbon 2 of heme B porphyrin ring with a hydroxyethyl farnesyl side group. The chain is Protoheme IX farnesyltransferase from Alkalilimnicola ehrlichii (strain ATCC BAA-1101 / DSM 17681 / MLHE-1).